The primary structure comprises 165 residues: NADPH-dependent 7-cyano-7-deazaguanine reductase (165 aa).

The active-site Thioimide intermediate is the cysteine 56. The active-site Proton donor is the aspartate 63. Substrate contacts are provided by residues 78 to 80 (VES) and 97 to 98 (HE).

This sequence belongs to the GTP cyclohydrolase I family. QueF type 1 subfamily.

Its subcellular location is the cytoplasm. The enzyme catalyses 7-aminomethyl-7-carbaguanine + 2 NADP(+) = 7-cyano-7-deazaguanine + 2 NADPH + 3 H(+). It participates in tRNA modification; tRNA-queuosine biosynthesis. Catalyzes the NADPH-dependent reduction of 7-cyano-7-deazaguanine (preQ0) to 7-aminomethyl-7-deazaguanine (preQ1). This chain is NADPH-dependent 7-cyano-7-deazaguanine reductase, found in Bacillus thuringiensis subsp. konkukian (strain 97-27).